Reading from the N-terminus, the 439-residue chain is Omega-aminotransferase (439 aa).

Residue 112–113 (GS) participates in pyridoxal 5'-phosphate binding. N6-(pyridoxal phosphate)lysine is present on lysine 281. Threonine 318 lines the pyridoxal 5'-phosphate pocket.

Belongs to the class-III pyridoxal-phosphate-dependent aminotransferase family. Homotetramer. The cofactor is pyridoxal 5'-phosphate.

The catalysed reaction is 3-oxopropanoate + L-alanine = beta-alanine + pyruvate. It catalyses the reaction 3-aminobutanoate + pyruvate = acetoacetate + L-alanine. It carries out the reaction benzylamine + pyruvate = benzaldehyde + L-alanine. The enzyme catalyses (S)-1-phenylethylamine + pyruvate = acetophenone + L-alanine. The catalysed reaction is 2-phenylethylamine + pyruvate = 2-phenylacetaldehyde + L-alanine. It catalyses the reaction 1-phenylpropylamine + pyruvate = 1-phenylpropan-1-one + L-alanine. It carries out the reaction 3-phenylpropylamine + pyruvate = 3-phenylpropanal + L-alanine. Its function is as follows. Aminotransferase that can use beta-amino acids, aliphatic amines, or aromatic amines as amino donors, and pyruvate as amino acceptor. Shows high activity for short-chain beta-amino acids, with the highest activity for 3-aminobutanoate and beta-alanine in vitro. Displays higher activity toward aromatic amines than aliphatic amines. May be involved in beta-alanine biosynthesis and/or degradation. This is Omega-aminotransferase from Caulobacter vibrioides (strain ATCC 19089 / CIP 103742 / CB 15) (Caulobacter crescentus).